The chain runs to 165 residues: 2-C-methyl-D-erythritol 2,4-cyclodiphosphate synthase (165 aa).

Asp-8 and His-10 together coordinate a divalent metal cation. Residues 8 to 10 (DVH) and 34 to 35 (HS) contribute to the 4-CDP-2-C-methyl-D-erythritol 2-phosphate site. Position 42 (His-42) interacts with a divalent metal cation. 4-CDP-2-C-methyl-D-erythritol 2-phosphate-binding positions include 56-58 (DIG), 61-65 (FPDTD), 132-135 (TTTE), Phe-139, and Arg-142.

It belongs to the IspF family. As to quaternary structure, homotrimer. A divalent metal cation is required as a cofactor.

The enzyme catalyses 4-CDP-2-C-methyl-D-erythritol 2-phosphate = 2-C-methyl-D-erythritol 2,4-cyclic diphosphate + CMP. Its pathway is isoprenoid biosynthesis; isopentenyl diphosphate biosynthesis via DXP pathway; isopentenyl diphosphate from 1-deoxy-D-xylulose 5-phosphate: step 4/6. Its function is as follows. Involved in the biosynthesis of isopentenyl diphosphate (IPP) and dimethylallyl diphosphate (DMAPP), two major building blocks of isoprenoid compounds. Catalyzes the conversion of 4-diphosphocytidyl-2-C-methyl-D-erythritol 2-phosphate (CDP-ME2P) to 2-C-methyl-D-erythritol 2,4-cyclodiphosphate (ME-CPP) with a corresponding release of cytidine 5-monophosphate (CMP). In Halothermothrix orenii (strain H 168 / OCM 544 / DSM 9562), this protein is 2-C-methyl-D-erythritol 2,4-cyclodiphosphate synthase.